The following is a 292-amino-acid chain: Formamidopyrimidine-DNA glycosylase (292 aa).

The active-site Schiff-base intermediate with DNA is the Pro2. Glu3 functions as the Proton donor in the catalytic mechanism. Lys58 (proton donor; for beta-elimination activity) is an active-site residue. His98, Arg128, and Arg173 together coordinate DNA. The FPG-type zinc finger occupies 258–292 (LVYDRAGQPCRVCATPVRQIVQGQRSTFYCPNCQH). Catalysis depends on Arg282, which acts as the Proton donor; for delta-elimination activity.

This sequence belongs to the FPG family. In terms of assembly, monomer. It depends on Zn(2+) as a cofactor.

The enzyme catalyses Hydrolysis of DNA containing ring-opened 7-methylguanine residues, releasing 2,6-diamino-4-hydroxy-5-(N-methyl)formamidopyrimidine.. It catalyses the reaction 2'-deoxyribonucleotide-(2'-deoxyribose 5'-phosphate)-2'-deoxyribonucleotide-DNA = a 3'-end 2'-deoxyribonucleotide-(2,3-dehydro-2,3-deoxyribose 5'-phosphate)-DNA + a 5'-end 5'-phospho-2'-deoxyribonucleoside-DNA + H(+). Involved in base excision repair of DNA damaged by oxidation or by mutagenic agents. Acts as a DNA glycosylase that recognizes and removes damaged bases. Has a preference for oxidized purines, such as 7,8-dihydro-8-oxoguanine (8-oxoG). Has AP (apurinic/apyrimidinic) lyase activity and introduces nicks in the DNA strand. Cleaves the DNA backbone by beta-delta elimination to generate a single-strand break at the site of the removed base with both 3'- and 5'-phosphates. This Cupriavidus necator (strain ATCC 17699 / DSM 428 / KCTC 22496 / NCIMB 10442 / H16 / Stanier 337) (Ralstonia eutropha) protein is Formamidopyrimidine-DNA glycosylase.